The primary structure comprises 1058 residues: MGSVSNLVSPNICHPAPPCLTSRSNKFPWTKPISGLLFYRSVTPIKRCHLVRRSCVVSASLTGNLGRLKRNVQDFTSMNYWVVRDYYRLVESVNSLEPQIQSLSDEQLKAKTAEFRERLARGESLADMQAEAFAVVREAAKRTIGMRHFDVQIIGGGVLHDGSIAEMKTGEGKTLVSTLAAYLNALTGEGVHVVTVNDYLAQRDAEWMGRVHRFLGLSVGLIQRGMKAEERKFNYSCDITYTNNSELGFDYLRDNLTSNREQLVMRWPKPFHFAIVDEVDSVLIDEGRNPLLISGEANENAARYPVAAKVAELLVKDSHYKVELKENSVELTEEGISLAEMALETGDLWDENDPWARFVMNALKAKEFYKRDVQYIVRDGKALIINELTGRVEDKRRWSEGVHQAVEAKEGLEIQADSIVVAQITYQSLFKLYPKLSGMTGTAKTEEKEFLKMFQIPVIEVPTNLSNIRIDLPIQAFATARGKWEHVRREVEDMFGQGRPVLVGTTSVENSEYLSELLKEWGIPHNVLNARPKYAAREADFIAQAGRKYAITISTNMAGRGTDIILGGNPKMLAREIIEDSILSYLTSEVLADNIDDDELSQKVLSKIKVGPSSLALLARASLMAKYVGKSESKSWTRKKAKSVVTESLEKSQTMDPMELQNLINEQSEMYPLGPAIALAYLSVLKDCEAHCLHEGSEVKRLGGLHVIGTSLHESRRIDNQLRGRAGRQGDPGSTRFMISLQDEMFQKFNFDTEWAVRLISKITNDEDLPIEGDTIVKQLLALQINAEKYFFGIRKSLVEFDEVLEVQRKHVYDLRQLLLTGENESCSQHIFQYMQAVVDEIVVGNSNPQKHPRYWSLAKLLKEFMAISGNLLDESFSGITEETMLQSLENLHEGSSIEMEDLSLPHLPKPPNAFRGIRRKNSSLRRWLDICSDNLTGSGSYRTLINLLRKFLGDYLIASYLNVVQESGFDDGYIKEIERAVLLKTLDCYWRDHLVNMNKLSSAVNVRSFAHRNPLEEYKIDGCRFFISMLSATRRLTVESILQYWSSPMESQELFIS.

The N-terminal 58 residues, methionine 1–serine 58, are a transit peptide targeting the chloroplast. Methionine 167–threonine 174 contacts ATP.

This sequence belongs to the SecA family. Part of a second Sec protein translocation apparatus. Interacts probably with SCY2.

It localises to the plastid. Its subcellular location is the chloroplast membrane. It carries out the reaction ATP + H2O + chloroplast-proteinSide 1 = ADP + phosphate + chloroplast-proteinSide 2.. Involved in protein export. Probably interacts with other proteins to allow the postimport or conservative sorting pathway for inner membrane proteins in plastids. May have a central role in coupling the hydrolysis of ATP to the transfer of proteins across the membrane. The chain is Protein translocase subunit SECA2, chloroplastic from Arabidopsis thaliana (Mouse-ear cress).